The chain runs to 542 residues: Peptide chain release factor 3 (542 aa).

The region spanning 14 to 283 is the tr-type G domain; the sequence is DKRRNFAIIS…AFLEYALKPG (270 aa). GTP is bound by residues 23-30, 91-95, and 145-148; these read SHPDAGKT, DTPGH, and NKMD.

This sequence belongs to the TRAFAC class translation factor GTPase superfamily. Classic translation factor GTPase family. PrfC subfamily.

Its subcellular location is the cytoplasm. Increases the formation of ribosomal termination complexes and stimulates activities of RF-1 and RF-2. It binds guanine nucleotides and has strong preference for UGA stop codons. It may interact directly with the ribosome. The stimulation of RF-1 and RF-2 is significantly reduced by GTP and GDP, but not by GMP. The polypeptide is Peptide chain release factor 3 (Trichodesmium erythraeum (strain IMS101)).